The primary structure comprises 87 residues: uncharacterized protein (87 aa).

The chain crosses the membrane as a helical span at residues 25 to 47; sequence FFWEVCNMILFIIIALCGYLLFS.

Its subcellular location is the membrane. This is an uncharacterized protein from Bacillus subtilis (strain 168).